A 1749-amino-acid polypeptide reads, in one-letter code: MSDTKVKVAVRVRPMNRRELELNTKCVVEMEGNQTVLHPPPSNTKQGERKPPKVFAFDYCFWSMDESNTTKYAGQEVVFKCLGEGILEKAFQGYNACIFAYGQTGSGKSFSMMGHAEQLGLIPRLCCALFQRIALEQNESQTFKVEVSYMEIYNEKVRDLLDPKGSRQSLKVREHKVLGPYVDGLSQLAVTSFEDIESLMSEGNKSRTVAATNMNEESSRSHAVFNIIITQTLYDLQSGNSGEKVSKVSLVDLAGSERVSKTGAAGERLKEGSNINKSLTTLGLVISSLADQAAGKGKNKFVPYRDSVLTWLLKDNLGGNSQTSMIATISPAADNYEETLSTLRYADRAKRIVNHAVVNEDPNAKVIRELREEVEKLREQLSKAEAMKPPELKEKLEESEKLIKELTVTWEEKLRKTEAIAQERQRQLESMGISLETSGIKVGDDKCYLVNLNADPALNELLVYYLKDHTRVGADTSQDIQLFGIGIQPEHCEIDIAADGDITLTPKENARSCVNGTLVCNTTQLWHGDRILWGNNHFFRINLPKRKRRDWLKDFERETSSAEHDLDAASEASSEPDYNYEFAQMEVIMKTLNSNDPVQNVVQVLEKQYLEEKRTALEEQRLMYERELEQLRQQLSPERQPPSSASDRLAYSSQTAQQKVTQWAEERDELFRQSLAKLREQLVKANTLVREANFLAEEMSKLTDYQVTLQIPAANLSANRKRGAIVSEPAIQARRKGKGTQVWTIEKLENKLIDMRDLYQEWKENVPEAKRLYGKRGDPFYEAQENHNLIGVANVFLECLFCDVKLQYAVPIISQQGEVAGRLHVEVTRITGTIPERMAEDDSSENSSESGSLEVVDSSGEVIHRVKKLTCRVIIKEATGLPISLSNFVFCQYTFWDQCESTVAAPVVDPDVPSPQSKDAQYTVTFSHCKDYVVTVTEEFLEFISDGALAIEVWGHRCAGNGSPIWEVDSLHAKTRTLHDRWNEVTRRIEVWISILELNELGDYAAVELHQAKDVNTGGVFQLRQGHSRRVQVTVKPVQHSGTLPLMVEAILSVSIGCVTARSTKLQRGLDSYQEEDLNCVRERWSDALIKRREYLDEQIKKVSNKKEKTEDDMEREARLVEQWVGLTEERNAVLVPAPGSGIPGAPADWVPPPGMETHIPVLFLDLNADDLSANEQLVGPHASGVNSILPKEHGSQFFYLPIIKHSDDEVSATASWDSSVHDSLHLNRVTPQNERIYLIVKTTVQLSHPAAMELVLRKRIAANIYNKQSFTQSLKRRISLINICYSCGVTYEIVSNIPKATEEIEDRETLALLAARSENEGTLDGETYIEKYTRGVLQVENILSLERLRQAVTVKEALSTKARHIRRSLSTPNVHNVSSSRPDLSGFDEDDKGWPENQLDVSDYSSSYQDVACYGTLPRDSPRRSKEGCPSENPHALTVSPFKAFSPQPPKFFKPLMPVKEEHKKRLALEARPLLSQEDSEEEENELEALSRKLMLTQPYVPVEFADFSVYNASLENREWSSSKADLTDSRALEKAVSRSPTTSSLTSGYFSHSASNATLSDMAVPSSDSSDQLAVSTKEVECAEPPGPSLAPDVRRASNQELTEVGRGSGKDETIAVPLEENSALPKGTPSPQSIPEESSRMPCRTASCSELDVGPSKDGHQAREFCPGEVTIEHTTNILEDHSFTEFMGVSDGKDFDGLADCSVGEPSRRRALTNETDHKGIPERPPDADRLHPKIENDQEATATR.

In terms of domain architecture, Kinesin motor spans 5–352 (KVKVAVRVRP…LRYADRAKRI (348 aa)). 102 to 109 (GQTGSGKS) lines the ATP pocket. The stretch at 359-431 (NEDPNAKVIR…QERQRQLESM (73 aa)) forms a coiled coil. Positions 469-519 (HTRVGADTSQDIQLFGIGIQPEHCEIDIAADGDITLTPKENARSCVNGTLV) constitute an FHA domain. Residues 552-775 (LKDFERETSS…VPEAKRLYGK (224 aa)) are a coiled coil. Disordered regions lie at residues 633-652 (QQLSPERQPPSSASDRLAYS) and 834-853 (IPERMAEDDSSENSSESGSL). The residue at position 636 (S636) is a Phosphoserine. The stretch at 1086–1126 (SDALIKRREYLDEQIKKVSNKKEKTEDDMEREARLVEQWVG) forms a coiled coil. S1274 bears the Phosphoserine mark. Over residues 1370–1383 (LSTPNVHNVSSSRP) the composition is skewed to polar residues. Disordered stretches follow at residues 1370–1402 (LSTPNVHNVSSSRPDLSGFDEDDKGWPENQLDV) and 1417–1436 (TLPRDSPRRSKEGCPSENPH). Residues 1421–1430 (DSPRRSKEGC) are compositionally biased toward basic and acidic residues. Residues S1441, S1477, S1481, S1524, S1600, and S1650 each carry the phosphoserine modification. Residues 1475–1499 (LLSQEDSEEEENELEALSRKLMLTQ) are a coiled coil. Disordered regions lie at residues 1584–1665 (CAEP…GHQA) and 1698–1749 (DFDG…TATR). The span at 1719–1741 (ETDHKGIPERPPDADRLHPKIEN) shows a compositional bias: basic and acidic residues.

The protein belongs to the TRAFAC class myosin-kinesin ATPase superfamily. Kinesin family. Interacts with AP1G1 and AP1G2. Interacts with ZFYVE26. Interacts with AP2B1.

The protein localises to the golgi apparatus membrane. It localises to the cytoplasm. The protein resides in the cytoskeleton. Its subcellular location is the microtubule organizing center. It is found in the centrosome. The protein localises to the midbody. It localises to the endosome membrane. Functionally, plus end-directed microtubule-dependent motor protein involved in intracellular transport and regulating various processes such as mannose-6-phosphate receptor (M6PR) transport to the plasma membrane, endosomal sorting during melanosome biogenesis and cytokinesis. During melanosome maturation, required for delivering melanogenic enzymes from recycling endosomes to nascent melanosomes by creating peripheral recycling endosomal subdomains in melanocytes. Also required for the abscission step in cytokinesis: mediates translocation of ZFYVE26, and possibly TTC19, to the midbody during cytokinesis. Mediates the transport of M6PR-containing vesicles from trans-Golgi network to the plasma membrane via direct interaction with the AP-1 complex. The sequence is that of Kinesin-like protein KIF13A (Kif13a) from Mus musculus (Mouse).